The sequence spans 97 residues: Co-chaperonin GroES (97 aa).

It belongs to the GroES chaperonin family. Heptamer of 7 subunits arranged in a ring. Interacts with the chaperonin GroEL.

The protein resides in the cytoplasm. Functionally, together with the chaperonin GroEL, plays an essential role in assisting protein folding. The GroEL-GroES system forms a nano-cage that allows encapsulation of the non-native substrate proteins and provides a physical environment optimized to promote and accelerate protein folding. GroES binds to the apical surface of the GroEL ring, thereby capping the opening of the GroEL channel. This chain is Co-chaperonin GroES, found in Aeromonas salmonicida.